The following is a 313-amino-acid chain: Ribosomal RNA small subunit methyltransferase H (313 aa).

S-adenosyl-L-methionine-binding positions include 35 to 37 (GGH), Asp55, Phe79, Asp101, and Gln108. The disordered stretch occupies residues 276 to 300 (QGGPTLKSVGKMMPPDDEVADNPRA).

This sequence belongs to the methyltransferase superfamily. RsmH family.

The protein resides in the cytoplasm. It catalyses the reaction cytidine(1402) in 16S rRNA + S-adenosyl-L-methionine = N(4)-methylcytidine(1402) in 16S rRNA + S-adenosyl-L-homocysteine + H(+). Its function is as follows. Specifically methylates the N4 position of cytidine in position 1402 (C1402) of 16S rRNA. The sequence is that of Ribosomal RNA small subunit methyltransferase H from Dickeya chrysanthemi (strain Ech1591) (Dickeya zeae (strain Ech1591)).